The primary structure comprises 316 residues: tRNA dimethylallyltransferase (316 aa).

Residue 17–24 participates in ATP binding; that stretch reads GPTASGKT. 19–24 serves as a coordination point for substrate; the sequence is TASGKT. Interaction with substrate tRNA regions lie at residues 42–45, 166–170, and 247–252; these read DSAL, QRLSR, and RCVGYR.

Belongs to the IPP transferase family. As to quaternary structure, monomer. Requires Mg(2+) as cofactor.

The enzyme catalyses adenosine(37) in tRNA + dimethylallyl diphosphate = N(6)-dimethylallyladenosine(37) in tRNA + diphosphate. Catalyzes the transfer of a dimethylallyl group onto the adenine at position 37 in tRNAs that read codons beginning with uridine, leading to the formation of N6-(dimethylallyl)adenosine (i(6)A). The chain is tRNA dimethylallyltransferase from Erwinia tasmaniensis (strain DSM 17950 / CFBP 7177 / CIP 109463 / NCPPB 4357 / Et1/99).